The following is a 100-amino-acid chain: ATP synthase subunit c (100 aa).

A run of 2 helical transmembrane segments spans residues 27–47 (SVIA…IGMG) and 72–92 (FIAL…TLIV).

The protein belongs to the ATPase C chain family. In terms of assembly, F-type ATPases have 2 components, F(1) - the catalytic core - and F(0) - the membrane proton channel. F(1) has five subunits: alpha(3), beta(3), gamma(1), delta(1), epsilon(1). F(0) has three main subunits: a(1), b(2) and c(10-14). The alpha and beta chains form an alternating ring which encloses part of the gamma chain. F(1) is attached to F(0) by a central stalk formed by the gamma and epsilon chains, while a peripheral stalk is formed by the delta and b chains.

The protein resides in the cell inner membrane. Its function is as follows. F(1)F(0) ATP synthase produces ATP from ADP in the presence of a proton or sodium gradient. F-type ATPases consist of two structural domains, F(1) containing the extramembraneous catalytic core and F(0) containing the membrane proton channel, linked together by a central stalk and a peripheral stalk. During catalysis, ATP synthesis in the catalytic domain of F(1) is coupled via a rotary mechanism of the central stalk subunits to proton translocation. Key component of the F(0) channel; it plays a direct role in translocation across the membrane. A homomeric c-ring of between 10-14 subunits forms the central stalk rotor element with the F(1) delta and epsilon subunits. The chain is ATP synthase subunit c from Campylobacter concisus (strain 13826).